The following is a 501-amino-acid chain: Probable cytosol aminopeptidase (501 aa).

The Mn(2+) site is built by K268 and D273. K280 is a catalytic residue. The Mn(2+) site is built by D291, D350, and E352. R354 is a catalytic residue.

The protein belongs to the peptidase M17 family. Mn(2+) serves as cofactor.

The protein localises to the cytoplasm. It carries out the reaction Release of an N-terminal amino acid, Xaa-|-Yaa-, in which Xaa is preferably Leu, but may be other amino acids including Pro although not Arg or Lys, and Yaa may be Pro. Amino acid amides and methyl esters are also readily hydrolyzed, but rates on arylamides are exceedingly low.. The enzyme catalyses Release of an N-terminal amino acid, preferentially leucine, but not glutamic or aspartic acids.. Its function is as follows. Presumably involved in the processing and regular turnover of intracellular proteins. Catalyzes the removal of unsubstituted N-terminal amino acids from various peptides. The polypeptide is Probable cytosol aminopeptidase (Colwellia psychrerythraea (strain 34H / ATCC BAA-681) (Vibrio psychroerythus)).